Here is a 1034-residue protein sequence, read N- to C-terminus: Kinesin-like protein KIF28 (1034 aa).

A Kinesin motor domain is found at Ser16–Val363. Gly119–Ser126 contacts ATP. Positions Cys465–Gly528 constitute an FHA domain. 2 coiled-coil regions span residues Asn875–Glu904 and His994–Glu1027.

The protein belongs to the TRAFAC class myosin-kinesin ATPase superfamily. Kinesin family.

It localises to the mitochondrion membrane. In terms of biological role, microtubule-dependent motor protein required for mitochondrion morphology and transport of mitochondria in neuronal cells. The chain is Kinesin-like protein KIF28 from Rattus norvegicus (Rat).